Consider the following 288-residue polypeptide: Light-independent protochlorophyllide reductase iron-sulfur ATP-binding protein (288 aa).

ATP contacts are provided by residues 10 to 15 (GIGKST) and lysine 39. Residue serine 14 participates in Mg(2+) binding. [4Fe-4S] cluster contacts are provided by cysteine 95 and cysteine 129. 180-181 (NR) provides a ligand contact to ATP.

The protein belongs to the NifH/BchL/ChlL family. As to quaternary structure, homodimer. Protochlorophyllide reductase is composed of three subunits; ChlL, ChlN and ChlB. It depends on [4Fe-4S] cluster as a cofactor.

The enzyme catalyses chlorophyllide a + oxidized 2[4Fe-4S]-[ferredoxin] + 2 ADP + 2 phosphate = protochlorophyllide a + reduced 2[4Fe-4S]-[ferredoxin] + 2 ATP + 2 H2O. It functions in the pathway porphyrin-containing compound metabolism; chlorophyll biosynthesis (light-independent). Its function is as follows. Component of the dark-operative protochlorophyllide reductase (DPOR) that uses Mg-ATP and reduced ferredoxin to reduce ring D of protochlorophyllide (Pchlide) to form chlorophyllide a (Chlide). This reaction is light-independent. The L component serves as a unique electron donor to the NB-component of the complex, and binds Mg-ATP. This is Light-independent protochlorophyllide reductase iron-sulfur ATP-binding protein from Nostoc punctiforme (strain ATCC 29133 / PCC 73102).